Here is a 767-residue protein sequence, read N- to C-terminus: Bifunctional lysine-specific demethylase and histidyl-hydroxylase NO66 (767 aa).

The interval 21-324 is disordered; that stretch reads TVSQKQQREK…GRQEAHRQNS (304 aa). Ser44 is subject to Phosphoserine. Residues 46–71 are compositionally biased toward acidic residues; the sequence is SDDDDEDDGEGEDDNDSNSDEDESGS. Residues 72–81 are compositionally biased toward low complexity; the sequence is ESDATSADDS. The span at 82–98 shows a compositional bias: acidic residues; sequence FSSDDNDDDDSGDEDGS. Composition is skewed to polar residues over residues 127-137 and 177-199; these read YTINSENSSVE and ESAT…TSKP. At Ser214 the chain carries Phosphoserine. A compositionally biased stretch (polar residues) spans 262–279; the sequence is PSSSGASCPLPSKTSKQV. A compositionally biased stretch (basic and acidic residues) spans 315 to 324; the sequence is GRQEAHRQNS. Residues 420–565 form the JmjC domain; it reads CSIRILNPST…NLLEKLMPMV (146 aa). Fe cation-binding residues include His466, Asp468, and His531.

It belongs to the ROX family. NO66 subfamily. Fe(2+) is required as a cofactor.

It localises to the nucleus. It catalyses the reaction N(6),N(6)-dimethyl-L-lysyl(36)-[histone H3] + 2 2-oxoglutarate + 2 O2 = L-lysyl(36)-[histone H3] + 2 formaldehyde + 2 succinate + 2 CO2. Its function is as follows. Oxygenase that can act as both a histone lysine demethylase and a ribosomal histidine hydroxylase. Specifically demethylates 'Lys-4' (H3K4me) and 'Lys-36' (H3K36me) of histone H3, thereby playing a central role in histone code. In Drosophila willistoni (Fruit fly), this protein is Bifunctional lysine-specific demethylase and histidyl-hydroxylase NO66.